The primary structure comprises 105 residues: Early nodulin-93 (105 aa).

A helical membrane pass occupies residues 66–83 (TAQALIISTATAAAYFIV).

It is found in the membrane. This chain is Early nodulin-93, found in Glycine max (Soybean).